The following is a 1508-amino-acid chain: uncharacterized protein (1508 aa).

Residues 149–267 (ARRQQWRLRR…ARSLQEHRAT (119 aa)) are a coiled coil. Disordered stretches follow at residues 248–268 (ERSEREREEAARSLQEHRATE), 345–403 (SQDW…LAGS), 536–575 (FLKKHPKDLKDTWNNGGGSLAGRTEEGKARGTLGRKGKNL), 725–754 (GLEEEDEMPHQEASGLGCRGAPEEPDSQEH), and 868–916 (EAKS…AEPW). Positions 868-881 (EAKSKESGEGDKPG) are enriched in basic and acidic residues. A coiled-coil region spans residues 972–1034 (ISRLERDNHR…KGNLGQLQKA (63 aa)). 2 disordered regions span residues 1158 to 1186 (LAAGQTGPSTGTGNSRRGADSPPPSLVWR) and 1204 to 1246 (KEAH…EEDP). Positions 1163–1172 (TGPSTGTGNS) are enriched in polar residues. A compositionally biased stretch (basic and acidic residues) spans 1204–1215 (KEAHLEKEEKRP). Residues 1220 to 1230 (AQGQALSSLSN) show a composition bias toward polar residues. The stretch at 1271–1302 (HQASLDEATRLQEELQAKLEELQKKQHEAKLA) forms a coiled coil.

This is an uncharacterized protein from Homo sapiens (Human).